A 61-amino-acid polypeptide reads, in one-letter code: Large ribosomal subunit protein bL32 (61 aa).

The segment covering 1 to 10 has biased composition (basic residues); that stretch reads MAQPKKKTSN. The disordered stretch occupies residues 1 to 23; the sequence is MAQPKKKTSNAKRDQRRATWKRK.

Belongs to the bacterial ribosomal protein bL32 family.

The protein is Large ribosomal subunit protein bL32 of Gloeobacter violaceus (strain ATCC 29082 / PCC 7421).